The sequence spans 599 residues: MDEQVFKGDPDTPHSISFSGSGFLSYYQAGAVDALRDLAPRMLDTAHRFAGTSAGAVIAALVVCGIEMEKYLRVLNMGLAEVKKFFLGPLSPSCKMVQMMRQFLYDVLPEDSYKFATGKLHVSLTRVTDGENVVVSEYRSKEELIEALYCSCFVPVYCGFIPPTYRGERYIDGGFTSMQPCSFWTDSITISTFSSQQDICPRDCPTIFHDFRMFNFSFQFSLENITRMTHALFPPDLVILQEYYYRGYNDAVSYLRRLNAAYLDSPSKRVIFPRVEVYCQIEVALGHEPPPPSLQNLPALRRSPADSSQTHAQGSPKKDRKDSHSSAAPSVQTPESGCKESVESPVSLRVSISKQPSVSPLSPAQPVPVMRPTGPRDSCPINVQTPNPERGVKGALDSATERGMKDALASATDEQSTTTLPPVLLPAADSRGSKTGSSVPIGSPESPRLLLRSSQGATASRATLGLPPLSPSTPPAGPPVEDLGPERPTATGSPALSQLTGSAAPGTGKKAPHKPLLVEGPGEDSNTAKTMFKRKQKTNATRECFHRNAQSKKPASKLKSAPCPLNFPVLPKRVWVTYKPHPSRIQDYSYPEGVSGQNS.

The PNPLA domain maps to 16-185 (ISFSGSGFLS…TSMQPCSFWT (170 aa)). The GXSXG signature appears at 51-55 (GTSAG). Residue S53 is the Nucleophile of the active site. The active-site Proton acceptor is D172. The short motif at 172 to 174 (DGG) is the DGA/G element. The segment at 289-563 (PPPPSLQNLP…PASKLKSAPC (275 aa)) is disordered. Composition is skewed to polar residues over residues 325–335 (SSAAPSVQTPE) and 350–362 (VSIS…SPLS). The segment covering 443–454 (SPESPRLLLRSS) has biased composition (low complexity). The span at 468–478 (PLSPSTPPAGP) shows a compositional bias: pro residues. The segment covering 490–501 (ATGSPALSQLTG) has biased composition (polar residues). The segment covering 551 to 563 (SKKPASKLKSAPC) has biased composition (low complexity).

As to expression, specifically expressed in skin by keratinocytes, at the boundary area between the nucleated stratum granulosum and the denucleated stratum corneum in the epidermis (at protein level). Also expressed in stomach and other surface lining tissues like intestine and tongue. Also detected in testis as well as in other tissues but at very low level.

It localises to the cytoplasm. It catalyses the reaction an N-(omega-hydroxy-ultra-long chain fatty acyl)-sphingoid base + a (9Z,12Z)-octadecadienoyl-containing triacyl-sn-glycerol = an N-[omega-(9Z,12Z-octadecadienoyloxy)-O-ultra-long chain fatty acyl]-sphingoid base + a diacylglycerol. It carries out the reaction an N-(omega-hydroxy-ultra-long chain fatty acyl)-sphing-4-enine + a (9Z,12Z)-octadecadienoyl-containing triacyl-sn-glycerol = an N-(omega-(9Z,12Z-octadecadienoyloxy)-ultra-long chain fatty acyl)-sphing-4-enine + a diacylglycerol. The catalysed reaction is N-(28-hydroxyoctacosanoyl)-sphing-4-enine + a (9Z,12Z)-octadecadienoyl-containing triacyl-sn-glycerol = N-(28-(9Z,12Z-octadecadienoyloxy)-octacosanoyl)-sphing-4-enine + a diacylglycerol. The enzyme catalyses N-(30-hydroxytriacontanoyl)-sphing-4-enine + 1,2,3-tri-(9Z,12Z)-octadecadienoylglycerol = N-[30-(9Z,12Z-octadecadienoyloxy)-triacontanoyl]-sphing-4-enine + di-(9Z,12Z)-octadecadienoylglycerol. It catalyses the reaction N-(32-hydroxydotriacontanoyl)-sphing-4-enine + a (9Z,12Z)-octadecadienoyl-containing triacyl-sn-glycerol = N-(32-(9Z,12Z-octadecadienoyloxy)-dotricontanoyl)-sphing-4-enine + a diacylglycerol. It carries out the reaction N-(32-hydroxydotriacontenoyl)-sphing-4-enine + a (9Z,12Z)-octadecadienoyl-containing triacyl-sn-glycerol = an N-(32-(9Z,12Z-octadecadienoyloxy)-dotriacontenoyl)-sphing-4-enine + a diacylglycerol. The catalysed reaction is an N-(34-hydroxytetratriacontenoyl)-sphing-4-enine + a (9Z,12Z)-octadecadienoyl-containing triacyl-sn-glycerol = an N-(34-(9Z,12Z-octadecadienoyloxy)-tetratriacontenoyl)-sphing-4-enine + a diacylglycerol. The enzyme catalyses an N-(34-hydroxytetratriacontadienoyl)-sphing-4-enine + a (9Z,12Z)-octadecadienoyl-containing triacyl-sn-glycerol = an N-(34-(9Z,12Z-octadecadienoyloxy)-tetratriacontadienoyl)-sphing-4-enine + a diacylglycerol. It catalyses the reaction an N-(36-hydroxyhexatriacontenoyl)-sphing-4-enine + a (9Z,12Z)-octadecadienoyl-containing triacyl-sn-glycerol = an N-(36-(9Z,12Z-octadecadienoyloxy)-hexatriacontenoyl)-sphing-4-enine + a diacylglycerol. It carries out the reaction an N-(36-hydroxyhexatriacontadienoyl)-sphing-4-enine + a (9Z,12Z)-octadecadienoyl-containing triacyl-sn-glycerol = an N-(36-(9Z,12Z-octadecadienoyloxy)-hexatriacontadienoyl)-sphing-4-enine + a diacylglycerol. The catalysed reaction is an N-(38-hydroxyoctatriacontenoyl)-sphing-4-enine + a (9Z,12Z)-octadecadienoyl-containing triacyl-sn-glycerol = an N-(38-(9Z,12Z-octadecadienoyloxy)-octatriacontenoyl)-sphing-4-enine + a diacylglycerol. In terms of biological role, omega-hydroxyceramide transacylase involved in the synthesis of omega-O-acylceramides (esterified omega-hydroxyacyl-sphingosine; EOS), which are extremely hydrophobic lipids involved in skin barrier formation. Catalyzes the last step of the synthesis of omega-O-acylceramides by transferring linoleic acid from triglycerides to an omega-hydroxyceramide. Omega-O-acylceramides, are required for the biogenesis of lipid lamellae in the stratum corneum and the formation of the cornified lipid envelope which are essential for the epidermis barrier function. These lipids also play a role in keratinocyte differentiation. May also act on omega-hydroxylated ultra-long chain fatty acids (omega-OH ULCFA) and acylglucosylceramides (GlcEOS). The polypeptide is Omega-hydroxyceramide transacylase (Mus musculus (Mouse)).